Reading from the N-terminus, the 334-residue chain is Heat shock factor 2-binding protein (334 aa).

The interaction with BRME1 stretch occupies residues 14–51 (MGTKEEFVKVRKKDLERLTTEVMQIRDFLPRILNGEVL). The stretch at 49 to 122 (EVLESFQKLK…LLQQAEYCTE (74 aa)) forms a coiled coil. Residues 83–334 (ARLETVQADN…EDLRTLEHNV (252 aa)) are interaction with BRCA2.

In terms of assembly, associates with HSF2. The interaction seems to occur between the trimerization domain of HSF2 and the N-terminal hydrophilic region of HSF2BP. Interacts (via C-terminus) with BNC1. Interacts (via N-terminus) with BRCA2 and BRME1; the interactions are direct and allow the formation of a ternary complex. The complex BRME1:HSF2BP:BRCA2 interacts with SPATA22, MEIOB and RAD51. Post-translationally, sumoylated by UBE2I in response to MEKK1-mediated stimuli. In terms of tissue distribution, testis specific. Overexpressed in some tumors.

Its subcellular location is the cytoplasm. It localises to the chromosome. Meiotic recombination factor component of recombination bridges involved in meiotic double-strand break repair. Modulates the localization of recombinases DMC1:RAD51 to meiotic double-strand break (DSB) sites through the interaction with BRCA2 and its recruitment during meiotic recombination. Indispensable for the DSB repair, homologous synapsis, and crossover formation that are needed for progression past metaphase I, is essential for spermatogenesis and male fertility. Required for proper recombinase recruitment in female meiosis. Inhibits BNC1 transcriptional activity during spermatogenesis, probably by sequestering it in the cytoplasm. May be involved in modulating HSF2 activation in testis. The chain is Heat shock factor 2-binding protein from Homo sapiens (Human).